Reading from the N-terminus, the 285-residue chain is Polyamine aminopropyltransferase (285 aa).

The PABS domain occupies 2–237 (DLWFSESHTP…GYWCFGFASK (236 aa)). Gln-31 lines the S-methyl-5'-thioadenosine pocket. Residue Asp-86 coordinates spermidine. S-methyl-5'-thioadenosine is bound by residues Glu-106 and 137–138 (DG). Asp-155 functions as the Proton acceptor in the catalytic mechanism.

The protein belongs to the spermidine/spermine synthase family. In terms of assembly, homodimer or homotetramer.

It is found in the cytoplasm. The catalysed reaction is S-adenosyl 3-(methylsulfanyl)propylamine + putrescine = S-methyl-5'-thioadenosine + spermidine + H(+). It participates in amine and polyamine biosynthesis; spermidine biosynthesis; spermidine from putrescine: step 1/1. Catalyzes the irreversible transfer of a propylamine group from the amino donor S-adenosylmethioninamine (decarboxy-AdoMet) to putrescine (1,4-diaminobutane) to yield spermidine. This chain is Polyamine aminopropyltransferase, found in Streptococcus uberis (strain ATCC BAA-854 / 0140J).